The primary structure comprises 119 residues: Phosphoribosyl-AMP cyclohydrolase (119 aa).

D77 lines the Mg(2+) pocket. C78 is a Zn(2+) binding site. 2 residues coordinate Mg(2+): D79 and D81. Positions 94 and 101 each coordinate Zn(2+).

The protein belongs to the PRA-CH family. As to quaternary structure, homodimer. The cofactor is Mg(2+). It depends on Zn(2+) as a cofactor.

Its subcellular location is the cytoplasm. The catalysed reaction is 1-(5-phospho-beta-D-ribosyl)-5'-AMP + H2O = 1-(5-phospho-beta-D-ribosyl)-5-[(5-phospho-beta-D-ribosylamino)methylideneamino]imidazole-4-carboxamide. The protein operates within amino-acid biosynthesis; L-histidine biosynthesis; L-histidine from 5-phospho-alpha-D-ribose 1-diphosphate: step 3/9. In terms of biological role, catalyzes the hydrolysis of the adenine ring of phosphoribosyl-AMP. In Cereibacter sphaeroides (strain ATCC 17029 / ATH 2.4.9) (Rhodobacter sphaeroides), this protein is Phosphoribosyl-AMP cyclohydrolase.